A 316-amino-acid chain; its full sequence is Annexin D7 (316 aa).

The residue at position 2 (Ala-2) is an N-acetylalanine. Annexin repeat units lie at residues 11 to 82 (PLPE…LWTF), 83 to 154 (EPAE…PLVS), 166 to 237 (TLAR…AVIK), and 241 to 312 (YPEK…ALLG). 4 residues coordinate Ca(2+): Phe-24, Gly-26, Gly-28, and Glu-68. Ser-95 carries the post-translational modification Phosphoserine. Residues Thr-100 and Thr-112 each carry the phosphothreonine modification. Phosphotyrosine is present on Tyr-129. Ca(2+) contacts are provided by Ile-254 and Gly-258. The residue at position 283 (Tyr-283) is a Phosphotyrosine. Position 288 is a phosphoserine (Ser-288). Ca(2+)-binding residues include Asp-298, Thr-299, and Glu-304.

It belongs to the annexin (TC 1.A.31.1) family. As to expression, expressed in flowers.

The polypeptide is Annexin D7 (ANNAT7) (Arabidopsis thaliana (Mouse-ear cress)).